Reading from the N-terminus, the 255-residue chain is ATP synthase subunit a (255 aa).

6 helical membrane passes run 40 to 60, 109 to 129, 135 to 155, 163 to 183, 196 to 218, and 230 to 250; these read TEPIFMSLLIMVLFVLLASEV, LIGGSAAFIFFSNASALIPGV, NLNITIGCAVVVFVLFNYYGL, VAHLAGPKWYLAPLIFPIEVI, LMLNIGVDHLVASIFLGLVALFV, and IVVQTLVFCLLSCIYIGLATE.

This sequence belongs to the ATPase A chain family. As to quaternary structure, F-type ATPases have 2 components, CF(1) - the catalytic core - and CF(0) - the membrane proton channel. CF(1) has five subunits: alpha(3), beta(3), gamma(1), delta(1), epsilon(1). CF(0) has three main subunits: a(1), b(2) and c(9-12). The alpha and beta chains form an alternating ring which encloses part of the gamma chain. CF(1) is attached to CF(0) by a central stalk formed by the gamma and epsilon chains, while a peripheral stalk is formed by the delta and b chains.

It is found in the cell inner membrane. Functionally, key component of the proton channel; it plays a direct role in the translocation of protons across the membrane. This is ATP synthase subunit a from Sorangium cellulosum (strain So ce56) (Polyangium cellulosum (strain So ce56)).